We begin with the raw amino-acid sequence, 56 residues long: Photosystem II reaction center protein K (56 aa).

Positions 1–19 are excised as a propeptide; the sequence is MLNFLLQNTFVLWSNFILC. A helical transmembrane segment spans residues 35–55; sequence MPVIPVFFFLLAFVWQAAVSF.

The protein belongs to the PsbK family. PSII is composed of 1 copy each of membrane proteins PsbA, PsbB, PsbC, PsbD, PsbE, PsbF, PsbH, PsbI, PsbJ, PsbK, PsbL, PsbM, PsbT, PsbX, PsbY, PsbZ, Psb30/Ycf12, at least 3 peripheral proteins of the oxygen-evolving complex and a large number of cofactors. It forms dimeric complexes.

It localises to the plastid. Its subcellular location is the chloroplast thylakoid membrane. Functionally, one of the components of the core complex of photosystem II (PSII). PSII is a light-driven water:plastoquinone oxidoreductase that uses light energy to abstract electrons from H(2)O, generating O(2) and a proton gradient subsequently used for ATP formation. It consists of a core antenna complex that captures photons, and an electron transfer chain that converts photonic excitation into a charge separation. In Welwitschia mirabilis (Tree tumbo), this protein is Photosystem II reaction center protein K.